A 294-amino-acid chain; its full sequence is Bifunctional protein FolD (294 aa).

NADP(+)-binding positions include 171 to 173 (GRS), serine 196, and isoleucine 237.

It belongs to the tetrahydrofolate dehydrogenase/cyclohydrolase family. Homodimer.

The enzyme catalyses (6R)-5,10-methylene-5,6,7,8-tetrahydrofolate + NADP(+) = (6R)-5,10-methenyltetrahydrofolate + NADPH. It catalyses the reaction (6R)-5,10-methenyltetrahydrofolate + H2O = (6R)-10-formyltetrahydrofolate + H(+). Its pathway is one-carbon metabolism; tetrahydrofolate interconversion. In terms of biological role, catalyzes the oxidation of 5,10-methylenetetrahydrofolate to 5,10-methenyltetrahydrofolate and then the hydrolysis of 5,10-methenyltetrahydrofolate to 10-formyltetrahydrofolate. In Synechocystis sp. (strain ATCC 27184 / PCC 6803 / Kazusa), this protein is Bifunctional protein FolD.